A 229-amino-acid chain; its full sequence is Apoptosis regulator Bcl-2 (229 aa).

Positions 10–30 match the BH4 motif; the sequence is DNREIVMKYIHYKLSQRGYEW. The interval 30–82 is disordered; it reads WDAGDAGAAPPGAAPAPGILSSQPGRTPAPSRTSPPPPPAAAAGPAPSPVPPV. The segment covering 33-61 has biased composition (low complexity); it reads GDAGAAPPGAAPAPGILSSQPGRTPAPSR. Thr62 is modified (phosphothreonine; by MAPK8). Pro residues predominate over residues 62 to 81; sequence TSPPPPPAAAAGPAPSPVPP. The residue at position 63 (Ser63) is a Phosphoserine; by MAPK8 and PKC. Ser77 carries the phosphoserine; by MAPK8 modification. A BH3 motif is present at residues 83-97; sequence VHLTLRQAGDDFSRR. Positions 126 to 145 match the BH1 motif; it reads ELFRDGVNWGRIVAFFEFGG. A BH2 motif is present at residues 177-192; sequence TWIQDNGGWDAFVELY. Residues 202–223 form a helical membrane-spanning segment; the sequence is FSWLSLKALLSLALVGACITLG.

Belongs to the Bcl-2 family. As to quaternary structure, forms homodimers, and heterodimers with BAX, BAD, BAK and Bcl-X(L). Heterodimerization with BAX requires intact BH1 and BH2 motifs, and is necessary for anti-apoptotic activity. Component of the complex, at least composed of LRPPRC, BECN1 and BCL2; the interactions prevent BECN1 from forming an autophagy-inducing complex with PIK3C3. Interacts with EI24. Also interacts with APAF1, BBC3, BCL2L1, BNIPL, MRPL41 and TP53BP2. Binding to FKBP8 seems to target BCL2 to the mitochondria and probably interferes with the binding of BCL2 to its targets. Interacts with BAG1 in an ATP-dependent manner. Interacts with RAF1 (the 'Ser-338' and 'Ser-339' phosphorylated form). Interacts (via the BH4 domain) with EGLN3; the interaction prevents the formation of the BAX-BCL2 complex and inhibits the anti-apoptotic activity of BCL2. Interacts with G0S2; this interaction also prevents the formation of the anti-apoptotic BAX-BCL2 complex. Interacts with RTL10/BOP. Interacts with the SCF(FBXO10) complex. Interacts (via the loop between motifs BH4 and BH3) with NLRP1 (via LRR repeats), but not with NLRP2, NLRP3, NLRP4, PYCARD, nor MEFV. Interacts with GIMAP3/IAN4, GIMAP4/IAN1 and GIMAP5/IAN5. Interacts with BCAP31. Interacts with IRF3; the interaction is inhibited by Sendai virus infection. Interacts with BECN1; thereby inhibiting autophagy in non-starvation conditions. Interacts with AMBRA1; thereby inhibiting autophagy. Post-translationally, phosphorylation/dephosphorylation on Ser-63 regulates anti-apoptotic activity. Growth factor-stimulated phosphorylation on Ser-63 by PKC is required for the anti-apoptosis activity and occurs during the G2/M phase of the cell cycle. In the absence of growth factors, BCL2 appears to be phosphorylated by other protein kinases such as ERKs and stress-activated kinases. Phosphorylated by MAPK8/JNK1 at Thr-62, Ser-63 and Ser-77, which stimulates starvation-induced autophagy. Dephosphorylated by protein phosphatase 2A (PP2A). In terms of processing, proteolytically cleaved by caspases during apoptosis. The cleaved protein, lacking the BH4 motif, has pro-apoptotic activity, causes the release of cytochrome c into the cytosol promoting further caspase activity. Monoubiquitinated by PRKN, leading to an increase in its stability. Ubiquitinated by SCF(FBXO10), leading to its degradation by the proteasome.

It localises to the mitochondrion outer membrane. The protein resides in the nucleus membrane. Its subcellular location is the endoplasmic reticulum membrane. The protein localises to the cytoplasm. Suppresses apoptosis in a variety of cell systems including factor-dependent lymphohematopoietic and neural cells. Regulates cell death by controlling the mitochondrial membrane permeability. Appears to function in a feedback loop system with caspases. Inhibits caspase activity either by preventing the release of cytochrome c from the mitochondria and/or by binding to the apoptosis-activating factor (APAF-1). Also acts as an inhibitor of autophagy: interacts with BECN1 and AMBRA1 during non-starvation conditions and inhibits their autophagy function. May attenuate inflammation by impairing NLRP1-inflammasome activation, hence CASP1 activation and IL1B release. In Bos taurus (Bovine), this protein is Apoptosis regulator Bcl-2 (BCL2).